The sequence spans 317 residues: Olfactory receptor 2G2 (317 aa).

The Extracellular portion of the chain corresponds to 1-28 (MGMVRHTNESNLAGFILLGFSDYPQLQK). Residue N8 is glycosylated (N-linked (GlcNAc...) asparagine). A helical transmembrane segment spans residues 29–52 (VLFVLILILYLLTILGNTTIILVS). Residues 53-60 (RLEPKLHM) lie on the Cytoplasmic side of the membrane. Residues 61–82 (PMYFFLSHLSFLYRCFTSSVIP) form a helical membrane-spanning segment. At 83–103 (QLLVNLWEPMKTIAYGGCLVH) the chain is on the extracellular side. C100 and C192 are disulfide-bonded. Residues 104–123 (LYNSHALGSTECVLPAVMSC) traverse the membrane as a helical segment. At 124–142 (DRYVAVCRPLHYTVLMHIH) the chain is on the cytoplasmic side. The chain crosses the membrane as a helical span at residues 143-161 (LCMALASMAWLSGIATTLV). Topologically, residues 162 to 198 (QSTLTLQLPFCGHRQVDHFICEVPVLIKLACVGTTFN) are extracellular. Residues 199–222 (EAELFVASILFLIVPVSFILVSSG) form a helical membrane-spanning segment. Residues 223–239 (YIAHAVLRIKSATRRQK) lie on the Cytoplasmic side of the membrane. The helical transmembrane segment at 240–262 (AFGTCFSHLTVVTIFYGTIIFMY) threads the bilayer. At 263–275 (LQPAKSRSRDQGK) the chain is on the extracellular side. Residues 276 to 295 (FVSLFYTVVTRMLNPLIYTL) traverse the membrane as a helical segment. The Cytoplasmic portion of the chain corresponds to 296–317 (RIKEVKGALKKVLAKALGVNIL).

This sequence belongs to the G-protein coupled receptor 1 family.

Its subcellular location is the cell membrane. Odorant receptor. This Homo sapiens (Human) protein is Olfactory receptor 2G2 (OR2G2).